A 469-amino-acid polypeptide reads, in one-letter code: Diaminopimelate decarboxylase (469 aa).

The disordered stretch occupies residues 1 to 23 (MLSTEMPLPTTGSTLLKTPASPS). N6-(pyridoxal phosphate)lysine is present on lysine 93. Pyridoxal 5'-phosphate is bound by residues glycine 279 and 321–324 (EPGR). 3 residues coordinate substrate: arginine 324, arginine 361, and tyrosine 365. Cysteine 392 serves as the catalytic Proton donor. Glutamate 393 and tyrosine 421 together coordinate substrate. Tyrosine 421 contacts pyridoxal 5'-phosphate.

It belongs to the Orn/Lys/Arg decarboxylase class-II family. LysA subfamily. As to quaternary structure, homodimer. Pyridoxal 5'-phosphate serves as cofactor.

It carries out the reaction meso-2,6-diaminopimelate + H(+) = L-lysine + CO2. The protein operates within amino-acid biosynthesis; L-lysine biosynthesis via DAP pathway; L-lysine from DL-2,6-diaminopimelate: step 1/1. In terms of biological role, specifically catalyzes the decarboxylation of meso-diaminopimelate (meso-DAP) to L-lysine. This chain is Diaminopimelate decarboxylase, found in Synechocystis sp. (strain ATCC 27184 / PCC 6803 / Kazusa).